The following is a 748-amino-acid chain: MELEKVKINSLHCNDAVLSSLQASPSATSPQSVPSKANVVTEASIIEKTNQPHNVQEDNNYNRDCDSPESSSSEQDKELDDLRNLHSSSLTNSVVVGKSTGSLNGVYSITSVTSETKTLESVVTTNSASGSACLSNTPTADHIKKRIPSSRTPTRKALRIKFYRNGDRFYPGITIPVSNERYRSFERLFEDLTRLLEENVKIPGAVRTIYNLCGKKITSLDELEDGQSYVCSCNNENFKKVEYNTGSQPLSNLPLSNSRSNSHRLAKCRPSSPLKNGLLAGSSPFPACGGGTGNGSPLIASRLSDRVTVVHPRIVTLIRSGTKPRRIMRLLLNKRNSPSFDHVLTAITQVVRLDTGYVRKVFTLSGIPVVRLSDFFGSDDVFFAYGTERINTAEDFKLEAEEQRAINVIRKTMRTTGTTCKGPKPKMPIKSKKVYPPLVDSEPFKAETTPEDDRHAALLTSTGMEINELPSNIRNTYSLGRIIGDGNFAIVFKIKHRQTGHSYALKIIDKNKCKGKEHYIDAEVRVMKKLNHPHIISLILSVDQNTNMYLVLEYVSGGDLFDAITQVTRFSENQSRIMIRHLGAAMTYLHSMGIVHRDIKPENLLVKLDEHGNVLELKLADFGLACEVNDLLYAVCGTPTYVAPEILLEVGYGLKIDVWAAGIILYILLCGFPPFVAPDNQQEPLFDAIISGIYEFPDPYWSDIGDGVRDLIANMLQADPDVRFTSEDILDHSWTIGNKGNECTTYKR.

2 stretches are compositionally biased toward polar residues: residues 22–35 and 47–59; these read QASPSATSPQSVPS and EKTNQPHNVQEDN. Disordered stretches follow at residues 22 to 41 and 47 to 81; these read QASPSATSPQSVPSKANVVT and EKTNQPHNVQEDNNYNRDCDSPESSSSEQDKELDD. Ser67, Ser70, Ser73, Ser87, Ser88, and Ser89 each carry phosphoserine. Position 91 is a phosphothreonine (Thr91). A Phosphoserine modification is found at Ser93. Thr100 carries the post-translational modification Phosphothreonine. Doublecortin domains are found at residues 158–244 and 313–396; these read LRIK…VEYN and RIVT…AEDF. In terms of domain architecture, Protein kinase spans 477-735; the sequence is YSLGRIIGDG…SEDILDHSWT (259 aa). ATP-binding positions include 483–491 and Lys506; that span reads IGDGNFAIV. The active-site Proton acceptor is the Asp598.

Belongs to the protein kinase superfamily. CAMK Ser/Thr protein kinase family. CaMK subfamily.

The catalysed reaction is L-seryl-[protein] + ATP = O-phospho-L-seryl-[protein] + ADP + H(+). It catalyses the reaction L-threonyl-[protein] + ATP = O-phospho-L-threonyl-[protein] + ADP + H(+). The chain is Serine/threonine-protein kinase CG17528 from Drosophila melanogaster (Fruit fly).